Consider the following 184-residue polypeptide: MKNVTDSFVYLGHWPSAGSFGFNTDILATNLINLSVVFGVLIFFGKGVLNDLLDNRKQRILNTIRNSEELREGAIQQLENARARLRKVEKEADQFRVNGYSEIEREKLNLINSTYRTLKQLENYKNETILFEQQRTINQVRERVFQQALQGAIVTLKSCLSNELHLRTINANIGMFGTMKEITD.

Residues 27–49 (LATNLINLSVVFGVLIFFGKGVL) traverse the membrane as a helical segment.

The protein belongs to the ATPase B chain family. F-type ATPases have 2 components, F(1) - the catalytic core - and F(0) - the membrane proton channel. F(1) has five subunits: alpha(3), beta(3), gamma(1), delta(1), epsilon(1). F(0) has four main subunits: a(1), b(1), b'(1) and c(10-14). The alpha and beta chains form an alternating ring which encloses part of the gamma chain. F(1) is attached to F(0) by a central stalk formed by the gamma and epsilon chains, while a peripheral stalk is formed by the delta, b and b' chains.

It is found in the plastid. It localises to the chloroplast thylakoid membrane. Its function is as follows. F(1)F(0) ATP synthase produces ATP from ADP in the presence of a proton or sodium gradient. F-type ATPases consist of two structural domains, F(1) containing the extramembraneous catalytic core and F(0) containing the membrane proton channel, linked together by a central stalk and a peripheral stalk. During catalysis, ATP synthesis in the catalytic domain of F(1) is coupled via a rotary mechanism of the central stalk subunits to proton translocation. Component of the F(0) channel, it forms part of the peripheral stalk, linking F(1) to F(0). In Aethionema cordifolium (Lebanon stonecress), this protein is ATP synthase subunit b, chloroplastic.